We begin with the raw amino-acid sequence, 221 residues long: Stromal cell-derived factor 2-like protein 1 (221 aa).

An N-terminal signal peptide occupies residues 1 to 28 (MWSAGSGRAAGPALLGILLALSLSGGRA). 3 MIR domains span residues 33–87 (AGLV…IRGG), 95–150 (GSPV…VRCS), and 151–205 (GQHW…AMEG). The Prevents secretion from ER motif lies at 218–221 (HDEL).

Its subcellular location is the endoplasmic reticulum lumen. This chain is Stromal cell-derived factor 2-like protein 1 (SDF2L1), found in Bos taurus (Bovine).